Here is a 331-residue protein sequence, read N- to C-terminus: MTPTVFLSILCLGVALAAPAPDYNLDAEWEEWKRSNDRTYSPEEEKQRRAVWEGNVKWIKQHIMENGLWMNNFTIEMNEFGDMTGEEMKMLTESSSYPLRNGKHIQKRNPKIPPTLDWRKEGYVTPVRRQGSCGACWAFSVTACIEGQLFKKTGKLIPLSVQNLMDCSVSYGTKGCDGGRPYDAFQYVKNNGGLEAEATYPYEAKAKHCRYRPERSVVKVNRFFVVPRNEEALLQALVTHGPIAVAIDGSHASFHSYRGGIYHEPKCRKDTLDHGLLLVGYGYEGHESENRKYWLLKNSHGERWGENGYMKLPRGQNNYCGIASYAMYPAL.

The first 17 residues, Met-1 to Ala-17, serve as a signal peptide directing secretion. Residues Ala-18 to Lys-111 constitute a propeptide, activation peptide. The Nuclear localization signal signature appears at Lys-33–Ala-50. Asn-72 carries N-linked (GlcNAc...) asparagine glycosylation. Intrachain disulfides connect Cys-133–Cys-176, Cys-167–Cys-209, and Cys-267–Cys-320. Cys-136 is an active-site residue. Residues His-274 and Asn-298 contribute to the active site.

This sequence belongs to the peptidase C1 family. In terms of tissue distribution, expressed in placenta. Expressed in parietal and spiral artery-associated trophoblast giant cells, most abundantly during the phase of trophoblast invasion. From 14.5 dpc onwards, expressed at lower levels in labyrinth trophoblast cells. Expressed in trophoblast stem cells. Expressed in heart, liver and testis.

The protein resides in the endosome. It is found in the lysosome. The protein localises to the cytoplasm. Its subcellular location is the perinuclear region. It localises to the golgi apparatus. The protein resides in the nucleus. It is found in the secreted. The protein localises to the extracellular space. Functionally, involved in trophoblast cell proliferation and differentiation probably by affecting mitotic cell cycle progression. Proteolytic activity and nuclear localization are essential for its role in cell cycle progression. In Mus musculus (Mouse), this protein is Cathepsin 7.